The sequence spans 160 residues: uncharacterized protein (160 aa).

This is an uncharacterized protein from Lactobacillus helveticus (Lactobacillus suntoryeus).